The following is a 540-amino-acid chain: T-complex protein 1 subunit theta (540 aa).

Belongs to the TCP-1 chaperonin family. Heterooligomeric complex of about 850 to 900 kDa that forms two stacked rings, 12 to 16 nm in diameter.

The protein resides in the cytoplasm. Functionally, molecular chaperone; assists the folding of proteins upon ATP hydrolysis. Known to play a role, in vitro, in the folding of actin and tubulin. In yeast may play a role in mitotic spindle formation. The chain is T-complex protein 1 subunit theta (CCT8) from Candida albicans (Yeast).